Here is an 85-residue protein sequence, read N- to C-terminus: Large ribosomal subunit protein bL27 (85 aa).

It belongs to the bacterial ribosomal protein bL27 family.

The sequence is that of Large ribosomal subunit protein bL27 from Stutzerimonas stutzeri (strain A1501) (Pseudomonas stutzeri).